The chain runs to 127 residues: Large ribosomal subunit protein eL32B (127 aa).

Belongs to the eukaryotic ribosomal protein eL32 family. In terms of assembly, component of the large ribosomal subunit (LSU). Mature yeast ribosomes consist of a small (40S) and a large (60S) subunit. The 40S small subunit contains 1 molecule of ribosomal RNA (18S rRNA) and at least 33 different proteins. The large 60S subunit contains 3 rRNA molecules (25S, 5.8S and 5S rRNA) and at least 46 different proteins.

Its subcellular location is the cytoplasm. It is found in the nucleus. The protein resides in the nucleolus. In terms of biological role, component of the ribosome, a large ribonucleoprotein complex responsible for the synthesis of proteins in the cell. The small ribosomal subunit (SSU) binds messenger RNAs (mRNAs) and translates the encoded message by selecting cognate aminoacyl-transfer RNA (tRNA) molecules. The large subunit (LSU) contains the ribosomal catalytic site termed the peptidyl transferase center (PTC), which catalyzes the formation of peptide bonds, thereby polymerizing the amino acids delivered by tRNAs into a polypeptide chain. The nascent polypeptides leave the ribosome through a tunnel in the LSU and interact with protein factors that function in enzymatic processing, targeting, and the membrane insertion of nascent chains at the exit of the ribosomal tunnel. The polypeptide is Large ribosomal subunit protein eL32B (rpl3201) (Schizosaccharomyces pombe (strain 972 / ATCC 24843) (Fission yeast)).